Here is a 67-residue protein sequence, read N- to C-terminus: ATP synthase F(0) complex subunit 8 (67 aa).

Residues 8–24 (TWFTTIVAMILSLFILM) traverse the membrane as a helical segment. Lysine 54 carries the N6-acetyllysine; alternate modification. At lysine 54 the chain carries N6-succinyllysine; alternate. Position 57 is an N6-acetyllysine (lysine 57).

This sequence belongs to the ATPase protein 8 family. In terms of assembly, component of the ATP synthase complex composed at least of ATP5F1A/subunit alpha, ATP5F1B/subunit beta, ATP5MC1/subunit c (homooctomer), MT-ATP6/subunit a, MT-ATP8/subunit 8, ATP5ME/subunit e, ATP5MF/subunit f, ATP5MG/subunit g, ATP5MK/subunit k, ATP5MJ/subunit j, ATP5F1C/subunit gamma, ATP5F1D/subunit delta, ATP5F1E/subunit epsilon, ATP5PF/subunit F6, ATP5PB/subunit b, ATP5PD/subunit d, ATP5PO/subunit OSCP. ATP synthase complex consists of a soluble F(1) head domain (subunits alpha(3) and beta(3)) - the catalytic core - and a membrane F(0) domain - the membrane proton channel (subunits c, a, 8, e, f, g, k and j). These two domains are linked by a central stalk (subunits gamma, delta, and epsilon) rotating inside the F1 region and a stationary peripheral stalk (subunits F6, b, d, and OSCP). Interacts with PRICKLE3.

The protein resides in the mitochondrion membrane. Functionally, subunit 8, of the mitochondrial membrane ATP synthase complex (F(1)F(0) ATP synthase or Complex V) that produces ATP from ADP in the presence of a proton gradient across the membrane which is generated by electron transport complexes of the respiratory chain. ATP synthase complex consist of a soluble F(1) head domain - the catalytic core - and a membrane F(1) domain - the membrane proton channel. These two domains are linked by a central stalk rotating inside the F(1) region and a stationary peripheral stalk. During catalysis, ATP synthesis in the catalytic domain of F(1) is coupled via a rotary mechanism of the central stalk subunits to proton translocation. In vivo, can only synthesize ATP although its ATP hydrolase activity can be activated artificially in vitro. Part of the complex F(0) domain. The protein is ATP synthase F(0) complex subunit 8 of Oryctolagus cuniculus (Rabbit).